Consider the following 364-residue polypeptide: 3-isopropylmalate dehydrogenase (364 aa).

Residue 78-89 (GPKWGTGAVRPE) coordinates NAD(+). Residues arginine 96, arginine 106, arginine 135, and aspartate 224 each coordinate substrate. Aspartate 224, aspartate 249, and aspartate 253 together coordinate Mg(2+). 288–299 (GSAPDLPANKVN) serves as a coordination point for NAD(+).

It belongs to the isocitrate and isopropylmalate dehydrogenases family. As to quaternary structure, homodimer. Requires Mg(2+) as cofactor. It depends on Mn(2+) as a cofactor.

Its subcellular location is the cytoplasm. The enzyme catalyses (2R,3S)-3-isopropylmalate + NAD(+) = 4-methyl-2-oxopentanoate + CO2 + NADH. It participates in amino-acid biosynthesis; L-leucine biosynthesis; L-leucine from 3-methyl-2-oxobutanoate: step 3/4. In terms of biological role, catalyzes the oxidation of 3-carboxy-2-hydroxy-4-methylpentanoate (3-isopropylmalate) to 3-carboxy-4-methyl-2-oxopentanoate. The product decarboxylates to 4-methyl-2 oxopentanoate. This chain is 3-isopropylmalate dehydrogenase (LEU2), found in Wickerhamomyces anomalus (strain ATCC 8168 / CBS 5759 / DSM 6766 / JCM 3585 / IAM 12210 / NCYC 432 / NBRC 10213 / NRRL Y-366 / AJ 5027) (Yeast).